Consider the following 235-residue polypeptide: Ribonuclease S-2 (235 aa).

An N-terminal signal peptide occupies residues 1 to 31 (MATVQKSQHSHFFLLVGCIVHLSNFCSTTTA). Residue Gln-41 coordinates RNA. Cys-47 and Cys-54 form a disulfide bridge. Residue His-66 coordinates RNA. His-66 (proton donor) is an active-site residue. A glycan (N-linked (GlcNAc...) asparagine) is linked at Asn-72. 3 disulfide bridges follow: Cys-80-Cys-129, Cys-189-Cys-217, and Cys-200-Cys-211. Residues 105 to 106 (DL), Arg-108, and Phe-118 contribute to the RNA site. Gln-122 is a catalytic residue. 125–126 (KH) contacts RNA. The active-site Proton acceptor is the His-126.

This sequence belongs to the RNase T2 family.

Its subcellular location is the secreted. It localises to the extracellular space. It catalyses the reaction a ribonucleotidyl-ribonucleotide-RNA + H2O = a 3'-end 3'-phospho-ribonucleotide-RNA + a 5'-end dephospho-ribonucleoside-RNA + H(+). Functionally, self-incompatibility (SI) is the inherited ability of a flowering plant to prevent self-fertilization by discriminating between self and non-self pollen during pollination. In many species, self-incompatibility is controlled by the single, multiallelic locus S. The protein is Ribonuclease S-2 (S2) of Antirrhinum hispanicum (Snapdragon).